Consider the following 149-residue polypeptide: uncharacterized protein (149 aa).

A disordered region spans residues 1–103 (MFGLKVKNAE…SPTQGSRLRH (103 aa)). Over residues 7–18 (KNAEADTAKSNE) the composition is skewed to basic and acidic residues. Low complexity predominate over residues 26–41 (TGSSTTSGSGQSTQRG). A compositionally biased stretch (polar residues) spans 61 to 72 (GSQGNSGDQGTE).

The protein belongs to the adhesin P1 family.

This is an uncharacterized protein from Mycoplasma pneumoniae (strain ATCC 29342 / M129 / Subtype 1) (Mycoplasmoides pneumoniae).